A 241-amino-acid polypeptide reads, in one-letter code: Uridylate kinase (241 aa).

9–10 (GS) contributes to the ATP binding site. Residue G44 coordinates UMP. G45 and R49 together coordinate ATP. UMP is bound by residues D66 and 114–120 (VTPGQTT). ATP is bound by residues T140, Y146, and D149. A disordered region spans residues 222–241 (TDVIPTGSEEPIYWTGSSDA).

Belongs to the UMP kinase family. Homohexamer.

It localises to the cytoplasm. It catalyses the reaction UMP + ATP = UDP + ADP. The protein operates within pyrimidine metabolism; CTP biosynthesis via de novo pathway; UDP from UMP (UMPK route): step 1/1. With respect to regulation, inhibited by UTP. In terms of biological role, catalyzes the reversible phosphorylation of UMP to UDP. The sequence is that of Uridylate kinase from Halorubrum lacusprofundi (strain ATCC 49239 / DSM 5036 / JCM 8891 / ACAM 34).